The chain runs to 192 residues: Thymidine kinase (192 aa).

ATP is bound by residues 9–16 (SAMNAGKS) and 87–90 (DECQ). Residue Glu88 is the Proton acceptor of the active site. Residues Cys145, Cys147, Cys182, and His185 each coordinate Zn(2+).

This sequence belongs to the thymidine kinase family. As to quaternary structure, homotetramer.

The protein resides in the cytoplasm. It carries out the reaction thymidine + ATP = dTMP + ADP + H(+). The chain is Thymidine kinase from Shewanella oneidensis (strain ATCC 700550 / JCM 31522 / CIP 106686 / LMG 19005 / NCIMB 14063 / MR-1).